Here is a 478-residue protein sequence, read N- to C-terminus: Pyruvate kinase (478 aa).

R36 contacts substrate. The K(+) site is built by N38, S40, and D70. 38-41 (NFSH) is an ATP binding site. R77 and K160 together coordinate ATP. E225 is a binding site for Mg(2+). Positions 251, 252, and 284 each coordinate substrate. D252 lines the Mg(2+) pocket.

Belongs to the pyruvate kinase family. Homotetramer. It depends on Mg(2+) as a cofactor. K(+) is required as a cofactor.

The catalysed reaction is pyruvate + ATP = phosphoenolpyruvate + ADP + H(+). The protein operates within carbohydrate degradation; glycolysis; pyruvate from D-glyceraldehyde 3-phosphate: step 5/5. With respect to regulation, allosterically activated by AMP and by several sugar phosphates. Belongs to type II PK. The protein is Pyruvate kinase (pykA) of Haemophilus influenzae (strain ATCC 51907 / DSM 11121 / KW20 / Rd).